The sequence spans 144 residues: Large ribosomal subunit protein uL11 (144 aa).

Belongs to the universal ribosomal protein uL11 family. In terms of assembly, part of the ribosomal stalk of the 50S ribosomal subunit. Interacts with L10 and the large rRNA to form the base of the stalk. L10 forms an elongated spine to which L12 dimers bind in a sequential fashion forming a multimeric L10(L12)X complex. In terms of processing, one or more lysine residues are methylated.

Functionally, forms part of the ribosomal stalk which helps the ribosome interact with GTP-bound translation factors. This is Large ribosomal subunit protein uL11 from Rickettsia bellii (strain OSU 85-389).